Here is a 142-residue protein sequence, read N- to C-terminus: Alpha-lactalbumin (142 aa).

Residues 1-19 form the signal peptide; the sequence is MMSFVSLLLVGILFHATQA. A C-type lysozyme domain is found at 20–142; the sequence is EQLTKCEVFQ…KLDQWLCEKL (123 aa). Intrachain disulfides connect C25-C139, C47-C130, C80-C96, and C92-C110. N-linked (GlcNAc...) asparagine glycosylation is found at N64 and N93. Ca(2+)-binding residues include K98, D101, D103, D106, and D107.

The protein belongs to the glycosyl hydrolase 22 family. As to quaternary structure, lactose synthase (LS) is a heterodimer of a catalytic component, beta1,4-galactosyltransferase (beta4Gal-T1) and a regulatory component, alpha-lactalbumin (LA). As to expression, mammary gland specific. Secreted in milk.

It is found in the secreted. Its function is as follows. Regulatory subunit of lactose synthase, changes the substrate specificity of galactosyltransferase in the mammary gland making glucose a good acceptor substrate for this enzyme. This enables LS to synthesize lactose, the major carbohydrate component of milk. In other tissues, galactosyltransferase transfers galactose onto the N-acetylglucosamine of the oligosaccharide chains in glycoproteins. This chain is Alpha-lactalbumin (LALBA), found in Ovis aries (Sheep).